The following is a 507-amino-acid chain: ATP synthase subunit alpha, chloroplastic (507 aa).

Position 170–177 (170–177 (GDRQTGKT)) interacts with ATP.

The protein belongs to the ATPase alpha/beta chains family. In terms of assembly, F-type ATPases have 2 components, CF(1) - the catalytic core - and CF(0) - the membrane proton channel. CF(1) has five subunits: alpha(3), beta(3), gamma(1), delta(1), epsilon(1). CF(0) has four main subunits: a, b, b' and c.

Its subcellular location is the plastid. It localises to the chloroplast thylakoid membrane. The catalysed reaction is ATP + H2O + 4 H(+)(in) = ADP + phosphate + 5 H(+)(out). Functionally, produces ATP from ADP in the presence of a proton gradient across the membrane. The alpha chain is a regulatory subunit. The polypeptide is ATP synthase subunit alpha, chloroplastic (Huperzia lucidula (Shining clubmoss)).